Here is a 60-residue protein sequence, read N- to C-terminus: Large ribosomal subunit protein uL30 (60 aa).

The protein belongs to the universal ribosomal protein uL30 family. As to quaternary structure, part of the 50S ribosomal subunit.

The polypeptide is Large ribosomal subunit protein uL30 (Streptococcus pneumoniae serotype 2 (strain D39 / NCTC 7466)).